A 193-amino-acid chain; its full sequence is Peptide deformylase 2 (193 aa).

2 residues coordinate Fe cation: C100 and H142. E143 is an active-site residue. H146 is a Fe cation binding site.

The protein belongs to the polypeptide deformylase family. It depends on Fe(2+) as a cofactor.

It carries out the reaction N-terminal N-formyl-L-methionyl-[peptide] + H2O = N-terminal L-methionyl-[peptide] + formate. Removes the formyl group from the N-terminal Met of newly synthesized proteins. Requires at least a dipeptide for an efficient rate of reaction. N-terminal L-methionine is a prerequisite for activity but the enzyme has broad specificity at other positions. In Corynebacterium efficiens (strain DSM 44549 / YS-314 / AJ 12310 / JCM 11189 / NBRC 100395), this protein is Peptide deformylase 2.